The chain runs to 451 residues: Phosphoglucosamine mutase (451 aa).

Ser104 serves as the catalytic Phosphoserine intermediate. The Mg(2+) site is built by Ser104, Asp242, Asp244, and Asp246. Ser104 bears the Phosphoserine mark.

It belongs to the phosphohexose mutase family. Mg(2+) serves as cofactor. Post-translationally, activated by phosphorylation.

The enzyme catalyses alpha-D-glucosamine 1-phosphate = D-glucosamine 6-phosphate. Functionally, catalyzes the conversion of glucosamine-6-phosphate to glucosamine-1-phosphate. The polypeptide is Phosphoglucosamine mutase (Kocuria rhizophila (strain ATCC 9341 / DSM 348 / NBRC 103217 / DC2201)).